The following is a 167-amino-acid chain: Large ribosomal subunit protein uL10 (167 aa).

Belongs to the universal ribosomal protein uL10 family. Part of the ribosomal stalk of the 50S ribosomal subunit. The N-terminus interacts with L11 and the large rRNA to form the base of the stalk. The C-terminus forms an elongated spine to which L12 dimers bind in a sequential fashion forming a multimeric L10(L12)X complex.

In terms of biological role, forms part of the ribosomal stalk, playing a central role in the interaction of the ribosome with GTP-bound translation factors. In Erwinia tasmaniensis (strain DSM 17950 / CFBP 7177 / CIP 109463 / NCPPB 4357 / Et1/99), this protein is Large ribosomal subunit protein uL10.